Consider the following 376-residue polypeptide: Putative cytosolic 5'-nucleotidase 3 (376 aa).

Residue aspartate 119 is the Nucleophile of the active site. Aspartate 119 and aspartate 121 together coordinate Mg(2+). Aspartate 121 acts as the Proton donor in catalysis. Substrate-binding positions include glutamate 168, serine 189, serine 236 to alanine 237, and lysine 286. Aspartate 312 is a binding site for Mg(2+).

It belongs to the pyrimidine 5'-nucleotidase family.

It is found in the cytoplasm. It catalyses the reaction a ribonucleoside 5'-phosphate + H2O = a ribonucleoside + phosphate. The sequence is that of Putative cytosolic 5'-nucleotidase 3 from Caenorhabditis elegans.